The following is a 114-amino-acid chain: Iron-sulfur cluster insertion protein ErpA (114 aa).

The iron-sulfur cluster site is built by Cys42, Cys106, and Cys108.

It belongs to the HesB/IscA family. As to quaternary structure, homodimer. Iron-sulfur cluster is required as a cofactor.

Functionally, required for insertion of 4Fe-4S clusters for at least IspG. The sequence is that of Iron-sulfur cluster insertion protein ErpA from Buchnera aphidicola subsp. Acyrthosiphon pisum (strain 5A).